We begin with the raw amino-acid sequence, 160 residues long: Transcription elongation factor GreA (160 aa).

Positions Thr-10 to Lys-37 form a coiled coil.

It belongs to the GreA/GreB family.

In terms of biological role, necessary for efficient RNA polymerase transcription elongation past template-encoded arresting sites. The arresting sites in DNA have the property of trapping a certain fraction of elongating RNA polymerases that pass through, resulting in locked ternary complexes. Cleavage of the nascent transcript by cleavage factors such as GreA or GreB allows the resumption of elongation from the new 3'terminus. GreA releases sequences of 2 to 3 nucleotides. The sequence is that of Transcription elongation factor GreA from Listeria innocua serovar 6a (strain ATCC BAA-680 / CLIP 11262).